Consider the following 491-residue polypeptide: Galactose-1-phosphate uridylyltransferase (491 aa).

It belongs to the galactose-1-phosphate uridylyltransferase type 2 family.

The protein localises to the cytoplasm. The enzyme catalyses alpha-D-galactose 1-phosphate + UDP-alpha-D-glucose = alpha-D-glucose 1-phosphate + UDP-alpha-D-galactose. Its pathway is carbohydrate metabolism; galactose metabolism. This chain is Galactose-1-phosphate uridylyltransferase (galT), found in Streptococcus mutans serotype c (strain ATCC 700610 / UA159).